Here is a 348-residue protein sequence, read N- to C-terminus: MNGTEGPNFYVPFSNKTGVVRSPFEYPQYYLAEPWQFSMLAAYMFLLIVLGFPINFLTLYVTVQHKKLRTPLNYILLNLAVADLFMVFGGFTTTLYTSLHGYFVFGPTGCNVEGFFATLGGEIALWSLVVLAIERYVVVCKPMSNFRFGENHAIMGVAFTWVMALACAAPPLAGWSRYIPEGMQCSCGIDYYTLKPEINNESFVIYMFVVHFAIPMIVIFFCYGQLVFTVKEAAAQQQESATTQKAEKEVTRMVIIMVIAFLICWVPYASVAFYIFTHQGSDFGPIFMTLPAFFAKSSSIYNPVIYIMMNKQFRNCMITTLCCGKNPLGDDEASASASKTETSQVAPA.

The residue at position 1 (Met-1) is an N-acetylmethionine. The Extracellular segment spans residues 1 to 36 (MNGTEGPNFYVPFSNKTGVVRSPFEYPQYYLAEPWQ). N-linked (GlcNAc...) asparagine glycans are attached at residues Asn-2 and Asn-15. Residues 37–61 (FSMLAAYMFLLIVLGFPINFLTLYV) traverse the membrane as a helical segment. Residues 62-73 (TVQHKKLRTPLN) are Cytoplasmic-facing. The helical transmembrane segment at 74 to 96 (YILLNLAVADLFMVFGGFTTTLY) threads the bilayer. Residues 97-110 (TSLHGYFVFGPTGC) are Extracellular-facing. Cys-110 and Cys-187 are oxidised to a cystine. The helical transmembrane segment at 111 to 133 (NVEGFFATLGGEIALWSLVVLAI) threads the bilayer. The short motif at 134 to 136 (ERY) is the 'Ionic lock' involved in activated form stabilization element. At 134 to 152 (ERYVVVCKPMSNFRFGENH) the chain is on the cytoplasmic side. Residues 153 to 173 (AIMGVAFTWVMALACAAPPLA) form a helical membrane-spanning segment. The Extracellular segment spans residues 174 to 202 (GWSRYIPEGMQCSCGIDYYTLKPEINNES). Glu-201 lines the Zn(2+) pocket. Residues 203-224 (FVIYMFVVHFAIPMIVIFFCYG) traverse the membrane as a helical segment. Topologically, residues 225–252 (QLVFTVKEAAAQQQESATTQKAEKEVTR) are cytoplasmic. The chain crosses the membrane as a helical span at residues 253–274 (MVIIMVIAFLICWVPYASVAFY). At 275–286 (IFTHQGSDFGPI) the chain is on the extracellular side. Zn(2+) is bound at residue Gln-279. A helical membrane pass occupies residues 287–308 (FMTLPAFFAKSSSIYNPVIYIM). Lys-296 carries the N6-(retinylidene)lysine modification. Topologically, residues 309-348 (MNKQFRNCMITTLCCGKNPLGDDEASASASKTETSQVAPA) are cytoplasmic. Residues Cys-322 and Cys-323 are each lipidated (S-palmitoyl cysteine). An interaction with SAG region spans residues 330–348 (DDEASASASKTETSQVAPA). 2 positions are modified to phosphoserine: Ser-334 and Ser-338. Residues Thr-340 and Thr-342 each carry the phosphothreonine modification. Residue Ser-343 is modified to Phosphoserine.

The protein belongs to the G-protein coupled receptor 1 family. Opsin subfamily. Homodimer. May form a complex composed of RHO, GRK1 and RCVRN in a Ca(2+)-dependent manner; RCVRN prevents the interaction between GRK1 and RHO. Interacts with GRK1. Interacts (phosphorylated form) with SAG. Interacts with GNAT1. Interacts with GNAT3. SAG and G-proteins compete for a common binding site. Interacts with PRCD; the interaction promotes PRCD stability. Forms a complex with ASAP1 and ARF4. Forms a complex with ASAP1, RAB11A, Rabin8/RAB3IP, ARF4 and RAB11FIP3; the complex regulates Golgi-to-cilia rhodopsin/RHO transport in photoreceptors. In terms of processing, phosphorylated on some or all of the serine and threonine residues present in the C-terminal region. Contains one covalently linked retinal chromophore. Upon light absorption, the covalently bound 11-cis-retinal is converted to all-trans-retinal. After hydrolysis of the Schiff base and release of the covalently bound all-trans-retinal, active rhodopsin is regenerated by binding of a fresh molecule of 11-cis-retinal.

The protein resides in the membrane. The protein localises to the cell projection. It localises to the cilium. It is found in the photoreceptor outer segment. Functionally, photoreceptor required for image-forming vision at low light intensity. Required for photoreceptor cell viability after birth. Light-induced isomerization of 11-cis to all-trans retinal triggers a conformational change that activates signaling via G-proteins. Subsequent receptor phosphorylation mediates displacement of the bound G-protein alpha subunit by the arrestin SAG and terminates signaling. This chain is Rhodopsin (RHO), found in Canis lupus familiaris (Dog).